We begin with the raw amino-acid sequence, 198 residues long: Guanylate kinase (198 aa).

A Guanylate kinase-like domain is found at 6-192 (KSIVIFTGPS…AAQEIREILH (187 aa)). 13-20 (GPSGVGKG) serves as a coordination point for ATP.

The protein belongs to the guanylate kinase family.

The protein localises to the cytoplasm. The enzyme catalyses GMP + ATP = GDP + ADP. Its function is as follows. Essential for recycling GMP and indirectly, cGMP. This Mycoplasmopsis synoviae (strain 53) (Mycoplasma synoviae) protein is Guanylate kinase.